A 427-amino-acid polypeptide reads, in one-letter code: Serine hydroxymethyltransferase (427 aa).

(6S)-5,6,7,8-tetrahydrofolate is bound by residues Leu-118 and 122-124; that span reads GHL. Lys-227 is modified (N6-(pyridoxal phosphate)lysine). Position 351-353 (351-353) interacts with (6S)-5,6,7,8-tetrahydrofolate; that stretch reads SPF.

This sequence belongs to the SHMT family. In terms of assembly, homodimer. Pyridoxal 5'-phosphate serves as cofactor.

It localises to the cytoplasm. It carries out the reaction (6R)-5,10-methylene-5,6,7,8-tetrahydrofolate + glycine + H2O = (6S)-5,6,7,8-tetrahydrofolate + L-serine. Its pathway is one-carbon metabolism; tetrahydrofolate interconversion. The protein operates within amino-acid biosynthesis; glycine biosynthesis; glycine from L-serine: step 1/1. In terms of biological role, catalyzes the reversible interconversion of serine and glycine with tetrahydrofolate (THF) serving as the one-carbon carrier. This reaction serves as the major source of one-carbon groups required for the biosynthesis of purines, thymidylate, methionine, and other important biomolecules. Also exhibits THF-independent aldolase activity toward beta-hydroxyamino acids, producing glycine and aldehydes, via a retro-aldol mechanism. This is Serine hydroxymethyltransferase from Thermotoga petrophila (strain ATCC BAA-488 / DSM 13995 / JCM 10881 / RKU-1).